Here is a 62-residue protein sequence, read N- to C-terminus: Protein translocase subunit SecE (62 aa).

The helical transmembrane segment at 40–60 (LLVLAVVGVLAYIIQLALTLI) threads the bilayer.

Belongs to the SecE/SEC61-gamma family. As to quaternary structure, component of the Sec protein translocase complex. Heterotrimer consisting of SecY (alpha), SecG (beta) and SecE (gamma) subunits. The heterotrimers can form oligomers, although 1 heterotrimer is thought to be able to translocate proteins. Interacts with the ribosome. May interact with SecDF, and other proteins may be involved.

It localises to the cell membrane. In terms of biological role, essential subunit of the Sec protein translocation channel SecYEG. Clamps together the 2 halves of SecY. May contact the channel plug during translocation. This is Protein translocase subunit SecE from Saccharolobus solfataricus (strain ATCC 35092 / DSM 1617 / JCM 11322 / P2) (Sulfolobus solfataricus).